A 160-amino-acid chain; its full sequence is F-box protein At1g15015 (160 aa).

Residues 1-44 (MDVTLPHHVVEDILERLPVKTLRKFKCVCSTWRSTIDSQRFKDR) enclose the F-box domain.

This Arabidopsis thaliana (Mouse-ear cress) protein is F-box protein At1g15015.